Reading from the N-terminus, the 443-residue chain is Transcription factor E2F2 (443 aa).

The disordered stretch occupies residues 1–22 (MLRAPRTLAPATAQPTKSLPAL). The cyclin A/CDK2 binding stretch occupies residues 67–107 (ATPHGPEGQIVRCAPAGRLPAKRKLDLEGIGRPTVPEFRTP). The DNA-binding element occupies 109 to 198 (GKCIRVDGLP…KNNIQWVGRE (90 aa)). The leucine-zipper stretch occupies residues 157-178 (LNWAAEVLDVQKRRIYDITNVL). Positions 162–198 (EVLDVQKRRIYDITNVLEGIQLIRKKSKNNIQWVGRE) match the DEF box motif. Residues 199-291 (LFEDPTRPSR…PDRAEENLQI (93 aa)) are dimerization. The tract at residues 306–341 (PEEGQEPDSPAKEALPSTSALSPIPDCAQPGCSTDS) is disordered. A transactivation region spans residues 361 to 443 (PPPPLPPAPS…SYDLGDLLIN (83 aa)). A retinoblastoma protein binding region spans residues 416–433 (DEYLWGMDEGEGISDLFD).

The protein belongs to the E2F/DP family. In terms of assembly, component of the DRTF1/E2F transcription factor complex. Forms heterodimers with DP family members. The E2F2 complex binds specifically hypophosphorylated retinoblastoma protein RB1. During the cell cycle, RB1 becomes phosphorylated in mid-to-late G1 phase, detaches from the DRTF1/E2F complex, rendering E2F transcriptionally active. Viral oncoproteins, notably E1A, T-antigen and HPV E7, are capable of sequestering RB protein, thus releasing the active complex. Binds EAPP. Phosphorylated by CDK2 and cyclin A-CDK2 in the S-phase.

It localises to the nucleus. Functionally, transcription activator that binds DNA cooperatively with DP proteins through the E2 recognition site, 5'-TTTC[CG]CGC-3' found in the promoter region of a number of genes whose products are involved in cell cycle regulation or in DNA replication. The DRTF1/E2F complex functions in the control of cell-cycle progression from g1 to s phase. E2F2 binds specifically to RB1 in a cell-cycle dependent manner. This is Transcription factor E2F2 (E2f2) from Mus musculus (Mouse).